Reading from the N-terminus, the 284-residue chain is Signal peptidase I (284 aa).

A helical membrane pass occupies residues 4–22 (NFPLLLVIAVAVCGALALV). Residues 23 to 58 (DLVLFAPRRRAAISSYEGQVNEPDPAVLEKLNKEPL) are Cytoplasmic-facing. Residues 59–77 (LVEYGKSFFPVLFIVLVLR) form a helical membrane-spanning segment. Residues 78–284 (SFLVEPFQIP…PNFSRVGVIH (207 aa)) are Periplasmic-facing. Residues Ser90 and Lys145 contribute to the active site.

It belongs to the peptidase S26 family.

It is found in the cell inner membrane. The enzyme catalyses Cleavage of hydrophobic, N-terminal signal or leader sequences from secreted and periplasmic proteins.. In Pseudomonas aeruginosa (strain ATCC 15692 / DSM 22644 / CIP 104116 / JCM 14847 / LMG 12228 / 1C / PRS 101 / PAO1), this protein is Signal peptidase I (lepB).